Here is a 565-residue protein sequence, read N- to C-terminus: O-fucosyltransferase 7 (565 aa).

The helical; Signal-anchor for type II membrane protein transmembrane segment at 17–37 (VLIWAICVMTLLCFLTVHIYV) threads the bilayer. Asn62, Asn73, Asn104, Asn124, and Asn190 each carry an N-linked (GlcNAc...) asparagine glycan. Residue 327-329 (HLR) participates in substrate binding. The N-linked (GlcNAc...) asparagine glycan is linked to Asn441. Residues 515-565 (NEIHKTRQGSPRRRKGPASGTKGLERHRSEESFYENPLPDCLCQRDPSKAR) are disordered. Residues 520 to 530 (TRQGSPRRRKG) are compositionally biased toward basic residues.

This sequence belongs to the glycosyltransferase GT106 family.

The protein localises to the membrane. It participates in glycan metabolism. This Arabidopsis thaliana (Mouse-ear cress) protein is O-fucosyltransferase 7.